The sequence spans 406 residues: MSEWLRFLKRDQQLDVYFFAVPRLSLDIMGYWPGKTGDTWPWRSLIHFAILAIGVATELHAGMCFLDRQQITLALETLCPAGTSAVTLLKMFLMLRFRQDLSIMWNRLRGLLFDPNWERPEQRDIRLKHSAMAARINFWPLSAGFFTCTTYNLKPILIAMILYLQNRYEDFVWFTPFNMTMPKVLLNYPFFPLTYIFIAYTGYVTIFMFGGCDGFYFEFCAHLSALFEVLQAEIESMFRPYTDHLELSPVQLYILEQKMRSVIIRHNAIIDLTRFFRDRYTIITLAHFVSAAMVIGFSMVNLLTLGNNGLGAMLYVAYTVAALSQLLVYCYGGTLVAESSTGLCRAMFSCPWQLFKPKQRRLVQLLILRSQRPVSMAVPFFSPSLATFAAILQTSGSIIALVKSFQ.

Over 1–45 (MSEWLRFLKRDQQLDVYFFAVPRLSLDIMGYWPGKTGDTWPWRSL) the chain is Cytoplasmic. Residues 46-66 (IHFAILAIGVATELHAGMCFL) traverse the membrane as a helical segment. The Extracellular segment spans residues 67–74 (DRQQITLA). A helical membrane pass occupies residues 75 to 95 (LETLCPAGTSAVTLLKMFLML). At 96–143 (RFRQDLSIMWNRLRGLLFDPNWERPEQRDIRLKHSAMAARINFWPLSA) the chain is on the cytoplasmic side. A helical transmembrane segment spans residues 144 to 164 (GFFTCTTYNLKPILIAMILYL). Over 165–189 (QNRYEDFVWFTPFNMTMPKVLLNYP) the chain is Extracellular. Residue Asn-178 is glycosylated (N-linked (GlcNAc...) asparagine). A helical membrane pass occupies residues 190–210 (FFPLTYIFIAYTGYVTIFMFG). The Cytoplasmic segment spans residues 211–281 (GCDGFYFEFC…LTRFFRDRYT (71 aa)). The helical transmembrane segment at 282–302 (IITLAHFVSAAMVIGFSMVNL) threads the bilayer. Topologically, residues 303–308 (LTLGNN) are extracellular. The chain crosses the membrane as a helical span at residues 309-329 (GLGAMLYVAYTVAALSQLLVY). At 330-372 (CYGGTLVAESSTGLCRAMFSCPWQLFKPKQRRLVQLLILRSQR) the chain is on the cytoplasmic side. Residues 373–393 (PVSMAVPFFSPSLATFAAILQ) traverse the membrane as a helical segment. Residues 394–406 (TSGSIIALVKSFQ) are Extracellular-facing.

Belongs to the insect chemoreceptor superfamily. Heteromeric odorant receptor channel (TC 1.A.69) family. Or1a subfamily. In terms of assembly, interacts with Orco. Complexes exist early in the endomembrane system in olfactory sensory neurons (OSNs), coupling these complexes to the conserved ciliary trafficking pathway. Expressed in olfactory sensory neurons in the antenna.

It localises to the cell membrane. Odorant receptor which mediates acceptance or avoidance behavior, depending on its substrates. The odorant receptor repertoire encodes a large collection of odor stimuli that vary widely in identity, intensity, and duration. May form a complex with Orco to form odorant-sensing units, providing sensitive and prolonged odorant signaling and calcium permeability. Involved in the behavioral responses to esters, and specifically to ethyl hexanoate, benzaldehyde, and acetophenone. This is Odorant receptor 10a (Or10a) from Drosophila melanogaster (Fruit fly).